Consider the following 111-residue polypeptide: Large ribosomal subunit protein eL42 (111 aa).

Zn(2+)-binding residues include cysteine 12, cysteine 15, cysteine 72, and cysteine 77.

Belongs to the eukaryotic ribosomal protein eL42 family. As to quaternary structure, component of the large ribosomal subunit.

The protein localises to the cytoplasm. Component of the large ribosomal subunit. The ribosome is a large ribonucleoprotein complex responsible for the synthesis of proteins in the cell. The polypeptide is Large ribosomal subunit protein eL42 (RPL36A) (Oryctolagus cuniculus (Rabbit)).